The primary structure comprises 369 residues: Glutamate 5-kinase (369 aa).

Lys9 contacts ATP. Substrate contacts are provided by Ser49, Asp136, and Asn148. Residues 168–169 (TD) and 210–216 (TGGMLTK) each bind ATP. One can recognise a PUA domain in the interval 275-355 (QGSIWVDKGA…KGVLIYRDDW (81 aa)).

Belongs to the glutamate 5-kinase family.

The protein resides in the cytoplasm. It catalyses the reaction L-glutamate + ATP = L-glutamyl 5-phosphate + ADP. Its pathway is amino-acid biosynthesis; L-proline biosynthesis; L-glutamate 5-semialdehyde from L-glutamate: step 1/2. Catalyzes the transfer of a phosphate group to glutamate to form L-glutamate 5-phosphate. This Streptococcus pneumoniae serotype 4 (strain ATCC BAA-334 / TIGR4) protein is Glutamate 5-kinase.